The sequence spans 184 residues: Fruit protein pKIWI501 (184 aa).

The tract at residues 1 to 184 is disordered; sequence MATVEVTPAV…TEVPVDKTEE (184 aa). 2 stretches are compositionally biased toward low complexity: residues 25-36 and 53-65; these read PQEPQPEAAVAA and PEAV…PAAT. The segment covering 72 to 92 has biased composition (acidic residues); that stretch reads EVAEAEEEVVEEPQEVPEEPV. Residues 96-119 are compositionally biased toward basic and acidic residues; that stretch reads AAKEVEATEGKAEPTGEMKDKTPE. Residues 120–156 are compositionally biased toward low complexity; that stretch reads ATDAPEAPAAAEEPTDAPEAPAVAEEPTNAPEAPAVG. Basic and acidic residues predominate over residues 159-168; sequence PEAKEGKPDE.

To H.brasiliensis latex allergen Hev b 5.

The sequence is that of Fruit protein pKIWI501 from Actinidia deliciosa (Kiwi).